A 349-amino-acid chain; its full sequence is Sesquiterpene synthase MAC_05714 (349 aa).

Residues Asp-91 and Asp-96 each contribute to the Mg(2+) site. Positions 91–96 (DDLFVD) match the DDXXXD motif motif. A substrate-binding site is contributed by Arg-184. Positions 230, 234, and 238 each coordinate Mg(2+).

The protein belongs to the terpene synthase family. Requires Mg(2+) as cofactor.

The catalysed reaction is (2E,6E)-farnesyl diphosphate + H2O = (+)-corvol ether B + diphosphate. The enzyme catalyses (2E,6E)-farnesyl diphosphate + H2O = (+)-corvol ether A + diphosphate. Terpene synthase that catalyzes the conversion of (2E,6E)-farnesyl diphosphate (FPP) into sesquiterpenes which are important for fungi-environment interactions. Produces a mixture consisting of 8 sesquiterpenes including corvol ethers A and B, as well as traces of epizonarene, gamma-cadinene, delta-cadinene, alpha-cadinene, alpha-cadinol, and an unidentified sesquiterpene. Produces both corvol ether A and corvol ether B in similar concentrations. The sequence is that of Sesquiterpene synthase MAC_05714 from Metarhizium acridum (strain CQMa 102).